The following is a 486-amino-acid chain: uncharacterized protein (486 aa).

The helical transmembrane segment at 18–38 threads the bilayer; the sequence is TLLQLFVFTVICVFVLSGLAI. Residues 62-79 are compositionally biased toward basic and acidic residues; the sequence is DRQKQMEKQQDSGEKRSF. Disordered regions lie at residues 62 to 82 and 117 to 147; these read DRQK…FEST and IESS…GPQM. Over residues 119–132 the composition is skewed to low complexity; it reads SSSSSDSSSSSSSS. The next 3 helical transmembrane spans lie at 324–344, 365–385, and 451–471; these read VVYL…MMSI, IGQF…LASV, and MLIL…LPSI.

The protein belongs to the ABC-4 integral membrane protein family.

It localises to the cell membrane. This is an uncharacterized protein from Bacillus subtilis (strain 168).